Reading from the N-terminus, the 338-residue chain is Nodulation outer protein L (338 aa).

Residues 1-14 (MDINSTSPLNASPQ) are compositionally biased toward polar residues. Disordered regions lie at residues 1–48 (MDIN…LPQV), 85–158 (TRER…DLET), 187–209 (SPAP…PHAR), and 230–259 (PQAG…SSAG). Residues 85 to 97 (TRERSPHPSEQRP) show a composition bias toward basic and acidic residues. Residues 126–138 (VGPSRSGPSQAGL) show a composition bias toward polar residues. The span at 242-258 (SGPSQARPSHAWPSSSA) shows a compositional bias: polar residues.

Its subcellular location is the secreted. Its function is as follows. Putative symbiotic effector that modulates nodulation in legumes. When delivered into the plant cell, modulates the activity of signal transduction pathways that culminate in activation of PR proteins. The polypeptide is Nodulation outer protein L (nopL) (Sinorhizobium fredii (strain NBRC 101917 / NGR234)).